Consider the following 133-residue polypeptide: Large ribosomal subunit protein bL21 (133 aa).

Positions 1-22 (MAEKPAAKPKAAAAKAEAKDQS) are disordered.

It belongs to the bacterial ribosomal protein bL21 family. As to quaternary structure, part of the 50S ribosomal subunit. Contacts protein L20.

This protein binds to 23S rRNA in the presence of protein L20. The polypeptide is Large ribosomal subunit protein bL21 (Prochlorococcus marinus (strain MIT 9303)).